The sequence spans 318 residues: MPNIVLFSGSSHQDLSQKVAERLGLELGKVVTKKFSNQETSVEIGESVRGEDVYIIQSGCGEINDNLMELLIMINACKIASSSRVTAVIPCFPYARQDKKDKSRAPISAKLVANMLSVAGADHIITMDLHASQIQGFFDIPVDNLYAEPAVLQWIRENIPEWKNSIIVSPDAGGAKRVTSIADRLNVEFALIHKERKKANEVDRMVLVGDVKDRVAILVDDMADTCGTICHAADKLLSAGATKVYAILTHGIFSGPAISRINNAAFEAVVVTNTIPQEDKMKQCSKIQVIDISMILAEAIRRTHNGESVSYLFSHVPL.

Residue 96-101 (RQDKKD) coordinates ATP. Residues Asp128, His130, Asp139, and Asp143 each coordinate Mg(2+). His130 provides a ligand contact to ATP. The interval 212–227 (KDRVAILVDDMADTCG) is binding of phosphoribosylpyrophosphate.

This sequence belongs to the ribose-phosphate pyrophosphokinase family. Homodimer. The active form is probably a hexamer composed of 3 homodimers. The cofactor is Mg(2+).

It carries out the reaction D-ribose 5-phosphate + ATP = 5-phospho-alpha-D-ribose 1-diphosphate + AMP + H(+). It participates in metabolic intermediate biosynthesis; 5-phospho-alpha-D-ribose 1-diphosphate biosynthesis; 5-phospho-alpha-D-ribose 1-diphosphate from D-ribose 5-phosphate (route I): step 1/1. With respect to regulation, activated by magnesium and inorganic phosphate. Competitively or non-competitively inhibited by ADP, 2,3-bisphosphoglyceride or GDP. Functionally, catalyzes the synthesis of phosphoribosylpyrophosphate (PRPP) that is essential for nucleotide synthesis. The chain is Ribose-phosphate pyrophosphokinase 2 (prps2) from Xenopus tropicalis (Western clawed frog).